The chain runs to 278 residues: Large ribosomal subunit protein uL2 (278 aa).

2 disordered regions span residues 1–20 and 225–278; these read MGIR…SVSD and VMNP…GKKR. A compositionally biased stretch (basic residues) spans 258–278; that stretch reads RNKKKASSRLIVRRRKSGKKR.

The protein belongs to the universal ribosomal protein uL2 family. In terms of assembly, part of the 50S ribosomal subunit. Forms a bridge to the 30S subunit in the 70S ribosome.

In terms of biological role, one of the primary rRNA binding proteins. Required for association of the 30S and 50S subunits to form the 70S ribosome, for tRNA binding and peptide bond formation. It has been suggested to have peptidyltransferase activity; this is somewhat controversial. Makes several contacts with the 16S rRNA in the 70S ribosome. In Cutibacterium acnes (strain DSM 16379 / KPA171202) (Propionibacterium acnes), this protein is Large ribosomal subunit protein uL2.